A 566-amino-acid chain; its full sequence is Sodium-dependent high-affinity dicarboxylate transporter 3 (566 aa).

Helical transmembrane passes span 55–75 (LVLV…GPEW), 92–112 (VMPL…VGVL), 123–139 (NDTN…AAAV), 162–182 (WIML…SNTA), 219–239 (MATG…TGTA), 268–288 (WIFF…MTLV), 329–349 (ILLS…GVFF), 352–372 (GAYT…VLPS), 400–420 (ETFP…AAGV), 439–459 (LPLW…TNIC), 496–516 (FAFI…SGMV), and 521–541 (MAFV…LYMN).

The protein belongs to the SLC13A/DASS transporter (TC 2.A.47) family. NADC subfamily. As to expression, nad-1 and nad-2 are coexpressed in the intestinal tract from early larvae to adults, expression is from the pharynx through to the anus. Expression level is significantly greater in the anterior half of the intestine than in the posterior half.

It localises to the membrane. High-affinity sodium-dicarboxylate cotransporter that accepts a range of tricarboxylic acid-cycle intermediates with 4-5 carbon atoms. There is no interaction with monocarboxylates. Plays a role in the regulation of life span. The chain is Sodium-dependent high-affinity dicarboxylate transporter 3 (nac-3) from Caenorhabditis elegans.